The sequence spans 471 residues: Glutamate--tRNA ligase (471 aa).

A 'HIGH' region motif is present at residues 9 to 19 (PSPTGFLHVGG). Residues C98, C100, C125, and D127 each coordinate Zn(2+). Positions 237–241 (KLSKR) match the 'KMSKS' region motif. An ATP-binding site is contributed by K240.

The protein belongs to the class-I aminoacyl-tRNA synthetase family. Glutamate--tRNA ligase type 1 subfamily. As to quaternary structure, monomer. Zn(2+) is required as a cofactor.

The protein resides in the cytoplasm. It catalyses the reaction tRNA(Glu) + L-glutamate + ATP = L-glutamyl-tRNA(Glu) + AMP + diphosphate. Functionally, catalyzes the attachment of glutamate to tRNA(Glu) in a two-step reaction: glutamate is first activated by ATP to form Glu-AMP and then transferred to the acceptor end of tRNA(Glu). This is Glutamate--tRNA ligase from Aeromonas hydrophila subsp. hydrophila (strain ATCC 7966 / DSM 30187 / BCRC 13018 / CCUG 14551 / JCM 1027 / KCTC 2358 / NCIMB 9240 / NCTC 8049).